A 559-amino-acid polypeptide reads, in one-letter code: Potassium-transporting ATPase potassium-binding subunit (559 aa).

Transmembrane regions (helical) follow at residues 5-25 (GFLL…PLGV), 63-83 (LLAI…MLLG), 132-152 (GLTV…FALI), 170-190 (LVRI…LLFI), 250-270 (LTNM…CFAF), 283-303 (LLWA…SAEV), 329-349 (VLVS…AVIA), 356-376 (ALGG…FGGV), 379-399 (GLYG…LMIG), 416-436 (MTAL…ALAM), 484-504 (LLAF…MAIA), and 524-544 (GALF…LTFI).

The protein belongs to the KdpA family. As to quaternary structure, the system is composed of three essential subunits: KdpA, KdpB and KdpC.

It is found in the cell inner membrane. Functionally, part of the high-affinity ATP-driven potassium transport (or Kdp) system, which catalyzes the hydrolysis of ATP coupled with the electrogenic transport of potassium into the cytoplasm. This subunit binds the periplasmic potassium ions and delivers the ions to the membrane domain of KdpB through an intramembrane tunnel. The sequence is that of Potassium-transporting ATPase potassium-binding subunit from Citrobacter koseri (strain ATCC BAA-895 / CDC 4225-83 / SGSC4696).